Here is a 207-residue protein sequence, read N- to C-terminus: Oligoribonuclease (207 aa).

One can recognise an Exonuclease domain in the interval 20–183; it reads LVWLDMEMTG…ADIHESIDEL (164 aa). Y141 is a catalytic residue.

Belongs to the oligoribonuclease family.

The protein resides in the cytoplasm. In terms of biological role, 3'-to-5' exoribonuclease specific for small oligoribonucleotides. This Paraburkholderia xenovorans (strain LB400) protein is Oligoribonuclease.